We begin with the raw amino-acid sequence, 435 residues long: E3 ubiquitin-protein ligase RING1 (435 aa).

The RING-type zinc finger occupies 46-86 (CPICLDMLKKTMTTKECLHRFCSDCIVTALRSGNKECPTCR). Residues 144-322 (KLQSQNRPQR…TEGEGNGELG (179 aa)) form a disordered region. Residues 157–170 (KGGGGGGGGGGNGN) are compositionally biased toward gly residues. Composition is skewed to low complexity over residues 171–188 (GAAN…TAVG), 202–211 (SNDSNSNTNS), 222–251 (SGTS…TSAT), and 259–278 (SNPP…SSSS). S202 carries the post-translational modification Phosphoserine. Position 266 is a phosphoserine (S266). Position 267 is a phosphothreonine (T267). S269 is modified (phosphoserine). Residues 309–322 (SNIDTEGEGNGELG) show a composition bias toward acidic residues.

In terms of assembly, interacts with ORD. Component of PRC1 complex, which contains many PcG proteins like Pc, ph, Scm, Psc, Sce and also chromatin remodeling proteins such as histone deacetylases. This complex is distinct from the Esc/E(z) complex, at least composed of esc, E(z), Su(z)12, HDAC1/Rpd3 and Caf1-55. The two complexes however cooperate and interact together during the first 3 hours of development to establish PcG silencing. In terms of tissue distribution, ubiquitously expressed in syncytial blastoderm embryos. Ubiquitously expressed until stage 11. Then, it is only expressed in the neuroectoderm. Later in embryonic development, it is only expressed in the CNS. In larvae, it is expressed in all imaginal disks. Expressed in the male and female gonads.

The protein localises to the nucleus. It localises to the chromosome. The enzyme catalyses S-ubiquitinyl-[E2 ubiquitin-conjugating enzyme]-L-cysteine + [acceptor protein]-L-lysine = [E2 ubiquitin-conjugating enzyme]-L-cysteine + N(6)-ubiquitinyl-[acceptor protein]-L-lysine.. It participates in protein modification; protein ubiquitination. E3 ubiquitin-protein ligase that mediates monoubiquitination of 'Lys-118' of histone H2A, thereby playing a central role in histone code and gene regulation. H2A 'Lys-118' ubiquitination gives a specific tag for epigenetic transcriptional repression. Polycomb group (PcG) protein. PcG proteins act by forming multiprotein complexes, which are required to maintain the transcriptionally repressive state of homeotic genes throughout development. PcG proteins are not required to initiate repression, but to maintain it during later stages of development. PcG complexes act via modification of histones, such as methylation, deacetylation, ubiquitination rendering chromatin heritably changed in its expressibility. May play a role in meiotic sister chromatid cohesion. In Drosophila melanogaster (Fruit fly), this protein is E3 ubiquitin-protein ligase RING1 (Sce).